The chain runs to 366 residues: Peroxisomal (S)-2-hydroxy-acid oxidase GLO4 (366 aa).

Residues 1 to 360 (MEDNLPVNVR…TRSHVMTEGD (360 aa)) enclose the FMN hydroxy acid dehydrogenase domain. Tyr-27 provides a ligand contact to a 2-oxocarboxylate. FMN contacts are provided by residues 80-82 (PTG), Ser-109, 130-132 (QLY), and Thr-158. Tyr-132 contributes to the a 2-oxocarboxylate binding site. Arg-167 contributes to the a 2-oxocarboxylate binding site. Lys-231 and Ser-253 together coordinate FMN. His-255 functions as the Proton acceptor in the catalytic mechanism. Residue Arg-258 coordinates a 2-oxocarboxylate. FMN is bound by residues 286–290 (DGGIR) and 309–310 (GR). The Microbody targeting signal motif lies at 364–366 (SLL).

This sequence belongs to the FMN-dependent alpha-hydroxy acid dehydrogenase family. In terms of assembly, homotetramer. Binds to CATB and CATC; these interactions are disturbed by alpha-hydroxy-2-pyridinemethanesulfonic acid (HPMS) and salicylic acid (SA). Requires FMN as cofactor.

It is found in the peroxisome. It catalyses the reaction a (2S)-2-hydroxycarboxylate + O2 = a 2-oxocarboxylate + H2O2. The protein operates within lipid metabolism; fatty acid metabolism. Oxidase that catalyzes the oxidation of a broad range of 2-hydroxyacids to the corresponding 2-oxoacids, with a reduction of O2 to H2O2. May be involved in a general medium- and long-chain fatty acid catabolic pathway such as alpha-oxidation. The polypeptide is Peroxisomal (S)-2-hydroxy-acid oxidase GLO4 (GLO4) (Oryza sativa subsp. japonica (Rice)).